The following is a 209-amino-acid chain: Bilin biosynthesis protein RpcF (209 aa).

This sequence belongs to the CpcE/RpcE/PecE family.

Its function is as follows. An enzyme involved in the biosynthesis of bilin. Might be involved in the specific attachment of phycoerythrobilin (PEB) to the R-phycocyanin II alpha chain. The chain is Bilin biosynthesis protein RpcF (rpcF) from Synechococcus sp. (strain WH8020).